The following is a 132-amino-acid chain: Large-conductance mechanosensitive channel (132 aa).

3 consecutive transmembrane segments (helical) span residues 14–34 (VVDLAVGVVIGAAFGKIVSSL), 38–58 (IITPLLGMVLGGVDFTSLHFG), and 67–87 (GNFIQTIFDFLIIAASIFMFV).

This sequence belongs to the MscL family. As to quaternary structure, homopentamer.

It is found in the cell membrane. Channel that opens in response to stretch forces in the membrane lipid bilayer. May participate in the regulation of osmotic pressure changes within the cell. This Bacillus cereus (strain ATCC 10987 / NRS 248) protein is Large-conductance mechanosensitive channel.